Reading from the N-terminus, the 375-residue chain is DNA replication and repair protein RecF (375 aa).

ATP is bound at residue 30 to 37; that stretch reads GENAQGKT.

This sequence belongs to the RecF family.

It localises to the cytoplasm. The RecF protein is involved in DNA metabolism; it is required for DNA replication and normal SOS inducibility. RecF binds preferentially to single-stranded, linear DNA. It also seems to bind ATP. This is DNA replication and repair protein RecF from Bacillus cereus (strain B4264).